Reading from the N-terminus, the 230-residue chain is Ribonuclease HII (230 aa).

Residues 21–212 (GPVAGVDEVG…VRRVANGSGG (192 aa)) form the RNase H type-2 domain. The a divalent metal cation site is built by aspartate 27, glutamate 28, and aspartate 121.

This sequence belongs to the RNase HII family. The cofactor is Mn(2+). Mg(2+) is required as a cofactor.

The protein localises to the cytoplasm. The catalysed reaction is Endonucleolytic cleavage to 5'-phosphomonoester.. In terms of biological role, endonuclease that specifically degrades the RNA of RNA-DNA hybrids. This is Ribonuclease HII from Mycobacterium avium (strain 104).